Consider the following 524-residue polypeptide: Germ cell-less protein-like 1 (524 aa).

A disordered region spans residues 1–37 (MGALSSRVLRPAGRTEQPEPTPGAGGAARRSDAGEDA). The Nuclear localization signal signature appears at 47-53 (GRKRKRS). The segment at 63-83 (DSETDDDEDEGDEQQRLLNTP) is disordered. The residue at position 64 (Ser-64) is a Phosphoserine. A compositionally biased stretch (acidic residues) spans 65 to 74 (ETDDDEDEGD). Position 66 is a phosphothreonine (Thr-66). The Nuclear localization signal signature appears at 83 to 89 (PRRKKLK). The BTB domain occupies 106 to 176 (SDIKICALGE…LYRDDVLIKP (71 aa)).

In terms of assembly, interacts with TMPO-Beta, TSG101 and TFDP2. Interacts with EMD. As to expression, ubiquitously expressed at low levels throughout development and in adult tissues.

Its subcellular location is the nucleus matrix. Possible function in spermatogenesis. Enhances the degradation of MDM2 and increases the amount of p53 probably by modulating the nucleocytoplasmic transport. This Mus musculus (Mouse) protein is Germ cell-less protein-like 1 (Gmcl1).